The sequence spans 227 residues: Cytochrome c oxidase subunit 2 (227 aa).

Over 1–14 (MAYPFQLGLQDATS) the chain is Mitochondrial intermembrane. A helical transmembrane segment spans residues 15–45 (PIMEELTNFHDHTLMIVFLISSLVLYIISLM). Residues 46-59 (LTTKLTHTSTMDAQ) lie on the Mitochondrial matrix side of the membrane. The helical transmembrane segment at 60–87 (EVETIWTILPAAILVLIALPSLRILYMM) threads the bilayer. At 88–227 (DEINNPALTV…YFENWSASMI (140 aa)) the chain is on the mitochondrial intermembrane side. Cu cation is bound by residues H161, C196, E198, C200, H204, and M207. A Mg(2+)-binding site is contributed by E198. A Phosphotyrosine modification is found at Y218.

The protein belongs to the cytochrome c oxidase subunit 2 family. Component of the cytochrome c oxidase (complex IV, CIV), a multisubunit enzyme composed of 14 subunits. The complex is composed of a catalytic core of 3 subunits MT-CO1, MT-CO2 and MT-CO3, encoded in the mitochondrial DNA, and 11 supernumerary subunits COX4I, COX5A, COX5B, COX6A, COX6B, COX6C, COX7A, COX7B, COX7C, COX8 and NDUFA4, which are encoded in the nuclear genome. The complex exists as a monomer or a dimer and forms supercomplexes (SCs) in the inner mitochondrial membrane with NADH-ubiquinone oxidoreductase (complex I, CI) and ubiquinol-cytochrome c oxidoreductase (cytochrome b-c1 complex, complex III, CIII), resulting in different assemblies (supercomplex SCI(1)III(2)IV(1) and megacomplex MCI(2)III(2)IV(2)). Found in a complex with TMEM177, COA6, COX18, COX20, SCO1 and SCO2. Interacts with TMEM177 in a COX20-dependent manner. Interacts with COX20. Interacts with COX16. Cu cation is required as a cofactor.

Its subcellular location is the mitochondrion inner membrane. It catalyses the reaction 4 Fe(II)-[cytochrome c] + O2 + 8 H(+)(in) = 4 Fe(III)-[cytochrome c] + 2 H2O + 4 H(+)(out). Functionally, component of the cytochrome c oxidase, the last enzyme in the mitochondrial electron transport chain which drives oxidative phosphorylation. The respiratory chain contains 3 multisubunit complexes succinate dehydrogenase (complex II, CII), ubiquinol-cytochrome c oxidoreductase (cytochrome b-c1 complex, complex III, CIII) and cytochrome c oxidase (complex IV, CIV), that cooperate to transfer electrons derived from NADH and succinate to molecular oxygen, creating an electrochemical gradient over the inner membrane that drives transmembrane transport and the ATP synthase. Cytochrome c oxidase is the component of the respiratory chain that catalyzes the reduction of oxygen to water. Electrons originating from reduced cytochrome c in the intermembrane space (IMS) are transferred via the dinuclear copper A center (CU(A)) of subunit 2 and heme A of subunit 1 to the active site in subunit 1, a binuclear center (BNC) formed by heme A3 and copper B (CU(B)). The BNC reduces molecular oxygen to 2 water molecules using 4 electrons from cytochrome c in the IMS and 4 protons from the mitochondrial matrix. This chain is Cytochrome c oxidase subunit 2 (MT-CO2), found in Rhabdomys pumilio (Four-striped grass mouse).